Reading from the N-terminus, the 262-residue chain is Phosphatidylserine decarboxylase proenzyme (262 aa).

Residues Asp86, His142, and Ser226 each act as charge relay system; for autoendoproteolytic cleavage activity in the active site. Ser226 functions as the Schiff-base intermediate with substrate; via pyruvic acid; for decarboxylase activity in the catalytic mechanism. Ser226 carries the pyruvic acid (Ser); by autocatalysis modification.

This sequence belongs to the phosphatidylserine decarboxylase family. PSD-B subfamily. Prokaryotic type I sub-subfamily. Heterodimer of a large membrane-associated beta subunit and a small pyruvoyl-containing alpha subunit. It depends on pyruvate as a cofactor. In terms of processing, is synthesized initially as an inactive proenzyme. Formation of the active enzyme involves a self-maturation process in which the active site pyruvoyl group is generated from an internal serine residue via an autocatalytic post-translational modification. Two non-identical subunits are generated from the proenzyme in this reaction, and the pyruvate is formed at the N-terminus of the alpha chain, which is derived from the carboxyl end of the proenzyme. The autoendoproteolytic cleavage occurs by a canonical serine protease mechanism, in which the side chain hydroxyl group of the serine supplies its oxygen atom to form the C-terminus of the beta chain, while the remainder of the serine residue undergoes an oxidative deamination to produce ammonia and the pyruvoyl prosthetic group on the alpha chain. During this reaction, the Ser that is part of the protease active site of the proenzyme becomes the pyruvoyl prosthetic group, which constitutes an essential element of the active site of the mature decarboxylase.

The protein resides in the cell membrane. It catalyses the reaction a 1,2-diacyl-sn-glycero-3-phospho-L-serine + H(+) = a 1,2-diacyl-sn-glycero-3-phosphoethanolamine + CO2. Its pathway is phospholipid metabolism; phosphatidylethanolamine biosynthesis; phosphatidylethanolamine from CDP-diacylglycerol: step 2/2. Its function is as follows. Catalyzes the formation of phosphatidylethanolamine (PtdEtn) from phosphatidylserine (PtdSer). The polypeptide is Phosphatidylserine decarboxylase proenzyme (Bacillus thuringiensis subsp. konkukian (strain 97-27)).